A 547-amino-acid chain; its full sequence is Dihydroxy-acid dehydratase (547 aa).

D78 contributes to the Mg(2+) binding site. Position 119 (C119) interacts with [2Fe-2S] cluster. Residues D120 and K121 each contribute to the Mg(2+) site. N6-carboxylysine is present on K121. [2Fe-2S] cluster is bound at residue C191. Mg(2+) is bound at residue E439. S464 functions as the Proton acceptor in the catalytic mechanism.

This sequence belongs to the IlvD/Edd family. Homodimer. [2Fe-2S] cluster serves as cofactor. Mg(2+) is required as a cofactor.

It carries out the reaction (2R)-2,3-dihydroxy-3-methylbutanoate = 3-methyl-2-oxobutanoate + H2O. It catalyses the reaction (2R,3R)-2,3-dihydroxy-3-methylpentanoate = (S)-3-methyl-2-oxopentanoate + H2O. The protein operates within amino-acid biosynthesis; L-isoleucine biosynthesis; L-isoleucine from 2-oxobutanoate: step 3/4. Its pathway is amino-acid biosynthesis; L-valine biosynthesis; L-valine from pyruvate: step 3/4. Functionally, functions in the biosynthesis of branched-chain amino acids. Catalyzes the dehydration of (2R,3R)-2,3-dihydroxy-3-methylpentanoate (2,3-dihydroxy-3-methylvalerate) into 2-oxo-3-methylpentanoate (2-oxo-3-methylvalerate) and of (2R)-2,3-dihydroxy-3-methylbutanoate (2,3-dihydroxyisovalerate) into 2-oxo-3-methylbutanoate (2-oxoisovalerate), the penultimate precursor to L-isoleucine and L-valine, respectively. The chain is Dihydroxy-acid dehydratase from Methanospirillum hungatei JF-1 (strain ATCC 27890 / DSM 864 / NBRC 100397 / JF-1).